The primary structure comprises 1342 residues: DNA-directed RNA polymerase subunit beta (1342 aa).

It belongs to the RNA polymerase beta chain family. As to quaternary structure, the RNAP catalytic core consists of 2 alpha, 1 beta, 1 beta' and 1 omega subunit. When a sigma factor is associated with the core the holoenzyme is formed, which can initiate transcription.

The catalysed reaction is RNA(n) + a ribonucleoside 5'-triphosphate = RNA(n+1) + diphosphate. Functionally, DNA-dependent RNA polymerase catalyzes the transcription of DNA into RNA using the four ribonucleoside triphosphates as substrates. In Salmonella choleraesuis (strain SC-B67), this protein is DNA-directed RNA polymerase subunit beta.